The primary structure comprises 432 residues: Adenylosuccinate synthetase (432 aa).

GTP-binding positions include 13-19 and 41-43; these read GDEGKGK and GHT. Residue aspartate 14 is the Proton acceptor of the active site. Mg(2+) contacts are provided by aspartate 14 and glycine 41. IMP is bound by residues 14 to 17, 39 to 42, threonine 130, arginine 144, glutamine 225, threonine 240, and arginine 304; these read DEGK and NAGH. The active-site Proton donor is histidine 42. 300-306 is a substrate binding site; the sequence is ATTGRKR. GTP is bound by residues arginine 306, 332–334, and 414–416; these read KLD and STG.

This sequence belongs to the adenylosuccinate synthetase family. As to quaternary structure, homodimer. It depends on Mg(2+) as a cofactor.

It localises to the cytoplasm. The enzyme catalyses IMP + L-aspartate + GTP = N(6)-(1,2-dicarboxyethyl)-AMP + GDP + phosphate + 2 H(+). It functions in the pathway purine metabolism; AMP biosynthesis via de novo pathway; AMP from IMP: step 1/2. Functionally, plays an important role in the de novo pathway of purine nucleotide biosynthesis. Catalyzes the first committed step in the biosynthesis of AMP from IMP. The polypeptide is Adenylosuccinate synthetase (Alkalilimnicola ehrlichii (strain ATCC BAA-1101 / DSM 17681 / MLHE-1)).